We begin with the raw amino-acid sequence, 401 residues long: MPMRYLNAMAALLMMFFTLLILSFTGILEFPSASTSMEHSIDPEPKLSDSTSDPFSDVLVAYKKWDFEVGCARFRENHKDAILGNVSSGSLQEFGCGKLKMKHVKVLVKGWTWIPDNLENLYSCRCGMTCLWTKSSVLADSPDALLFETTTPPLQRRVGDPLRVYMELEAGRKRSGREDIFISYHAKDDVQTTYAGSLFHNNRNYHISPHKNNDVLVYWSSSRCLPHRDRLAKSLLDLIPHHSFGKCLNNVGGLDSALSMYPECVAEHNAEAKWYDHLHCAMSHYKFVLAIENTAVESYVTEKLFYALDSGSVPIYFGASNVQDFVPPHSVIDGSKFGSMQELAAYVKRLGDDPVAYSEYHAWRRCGLMGNYGKTRAVSLDTLPCRLCEEISRRGGKNAGV.

The Cytoplasmic portion of the chain corresponds to 1–4 (MPMR). The chain crosses the membrane as a helical; Signal-anchor for type II membrane protein span at residues 5 to 27 (YLNAMAALLMMFFTLLILSFTGI). Topologically, residues 28-401 (LEFPSASTSM…SRRGGKNAGV (374 aa)) are lumenal. Asn-85 is a glycosylation site (N-linked (GlcNAc...) asparagine).

The protein belongs to the glycosyltransferase 10 family. Present in root, stem, flower buds and green siliques.

The protein resides in the golgi apparatus. The protein localises to the golgi stack membrane. It functions in the pathway protein modification; protein glycosylation. Its function is as follows. May be involved in cell wall synthesis. Catalyzes alpha-1,4 glycosidic linkages and generates Lewis-a epitopes. The polypeptide is Alpha-(1,4)-fucosyltransferase (FUT13) (Arabidopsis thaliana (Mouse-ear cress)).